Reading from the N-terminus, the 295-residue chain is Acetylglutamate kinase (295 aa).

Substrate-binding positions include 66–67, arginine 88, and asparagine 193; that span reads GG.

Belongs to the acetylglutamate kinase family. ArgB subfamily.

Its subcellular location is the cytoplasm. The catalysed reaction is N-acetyl-L-glutamate + ATP = N-acetyl-L-glutamyl 5-phosphate + ADP. It functions in the pathway amino-acid biosynthesis; L-arginine biosynthesis; N(2)-acetyl-L-ornithine from L-glutamate: step 2/4. Functionally, catalyzes the ATP-dependent phosphorylation of N-acetyl-L-glutamate. This chain is Acetylglutamate kinase, found in Rhizobium rhizogenes (strain K84 / ATCC BAA-868) (Agrobacterium radiobacter).